Consider the following 84-residue polypeptide: uncharacterized protein (84 aa).

This is an uncharacterized protein from Methanocaldococcus jannaschii (strain ATCC 43067 / DSM 2661 / JAL-1 / JCM 10045 / NBRC 100440) (Methanococcus jannaschii).